We begin with the raw amino-acid sequence, 154 residues long: 6,7-dimethyl-8-ribityllumazine synthase (154 aa).

5-amino-6-(D-ribitylamino)uracil is bound by residues 22–23 (FN), 56–58 (SWE), and 80–82 (VLI). Position 85 to 86 (85 to 86 (AT)) interacts with (2S)-2-hydroxy-3-oxobutyl phosphate. The active-site Proton donor is the H88. Position 113 (F113) interacts with 5-amino-6-(D-ribitylamino)uracil. Position 127 (R127) interacts with (2S)-2-hydroxy-3-oxobutyl phosphate. Residue K135 coordinates 5-amino-6-(D-ribitylamino)uracil.

The protein belongs to the DMRL synthase family. Forms an icosahedral capsid composed of 60 subunits, arranged as a dodecamer of pentamers.

It carries out the reaction (2S)-2-hydroxy-3-oxobutyl phosphate + 5-amino-6-(D-ribitylamino)uracil = 6,7-dimethyl-8-(1-D-ribityl)lumazine + phosphate + 2 H2O + H(+). The protein operates within cofactor biosynthesis; riboflavin biosynthesis; riboflavin from 2-hydroxy-3-oxobutyl phosphate and 5-amino-6-(D-ribitylamino)uracil: step 1/2. In terms of biological role, catalyzes the formation of 6,7-dimethyl-8-ribityllumazine by condensation of 5-amino-6-(D-ribitylamino)uracil with 3,4-dihydroxy-2-butanone 4-phosphate. This is the penultimate step in the biosynthesis of riboflavin. The chain is 6,7-dimethyl-8-ribityllumazine synthase (ribH) from Aquifex aeolicus (strain VF5).